The primary structure comprises 137 residues: Putative pre-16S rRNA nuclease (137 aa).

It belongs to the YqgF nuclease family.

Its subcellular location is the cytoplasm. Its function is as follows. Could be a nuclease involved in processing of the 5'-end of pre-16S rRNA. The protein is Putative pre-16S rRNA nuclease of Anaeromyxobacter sp. (strain K).